The primary structure comprises 321 residues: MNFISIIIPTFNEEKYITKCLENWFNQDYPKENYEILIFDGKSTDKTLDVIKELQKKHNFENIKIYTNEKRKQVYAFNEGIKNANGDFFIIFGAHAYPEQDFLKNNIETYQRIKKEEPKLAGVGGIINKISENMSAEIAKVIYSTPLSGGSSFWYAKEGFFSNTVVYGMYDTKMIKESEILFDTDFITGQDFEFNLHLIKEGFKLYTNPNIVSSYYTRSSVKKFIKQTISYGAAKGLMIRKGYFNILWLFPFGFLFMLLSIIITGLLIFIYIMAILIDTIRLLIKTREPLYIALPILLFLFHCLISYGFFKGLIKGNSTFK.

A run of 2 helical transmembrane segments spans residues 252–272 and 290–310; these read FGFL…FIYI and LYIA…YGFF.

It belongs to the glycosyltransferase 2 family.

It localises to the cell membrane. The enzyme catalyses an archaeal dolichyl N-acetyl-alpha-D-glucosaminyl phosphate + UDP-2,3-diacetamido-2,3-dideoxy-alpha-D-glucuronate = an archaeal dolichyl 3-O-(2,3-diacetamido-2,3-dideoxy- beta-D-glucuronosyl)-N-acetyl- alpha-D-glucosaminyl phosphate + UDP + H(+). It functions in the pathway cell surface structure biogenesis; S-layer biogenesis. It participates in protein modification; protein glycosylation. Involved in the assembly of an N-linked disaccharide that decorates the S-layer glycoprotein and flagellins. AglC catalyzes the transfer of 2,3-diacetamido-2,3-dideoxy-alpha-D-glucuronic acid (Glc-2,3-diNAcA) from uridine 5'-diphospho 2,3-diacetamido-2,3-dideoxy-alpha-D-glucuronic acid (UDP-Glc-2,3-diNAcA) to the AglK product Dol-P-GlcNAc to yield Dol-P-GlcNAc-Glc-2,3-diNAcA. AglC is specific for the monophosphate-linked Dol-P-GlcNAc. The protein is Dolichyl N-acetyl-alpha-D-glucosaminyl phosphate 3-beta-D-2,3-diacetamido-2,3-dideoxy-beta-D-glucuronosyltransferase of Methanococcus voltae.